The sequence spans 269 residues: Phosphate import ATP-binding protein PstB 1 (269 aa).

Residues 23–264 (LSTEDLNVYY…PKIKAAEDYV (242 aa)) form the ABC transporter domain. Residue 55 to 62 (GASGSGKS) coordinates ATP.

This sequence belongs to the ABC transporter superfamily. Phosphate importer (TC 3.A.1.7) family. In terms of assembly, the complex is composed of two ATP-binding proteins (PstB), two transmembrane proteins (PstC and PstA) and a solute-binding protein (PstS).

The protein localises to the cell membrane. It carries out the reaction phosphate(out) + ATP + H2O = ADP + 2 phosphate(in) + H(+). In terms of biological role, part of the ABC transporter complex PstSACB involved in phosphate import. Responsible for energy coupling to the transport system. This is Phosphate import ATP-binding protein PstB 1 from Latilactobacillus sakei subsp. sakei (strain 23K) (Lactobacillus sakei subsp. sakei).